Reading from the N-terminus, the 69-residue chain is Light-harvesting protein B-1015 beta chain (69 aa).

The Cytoplasmic segment spans residues 2–21; it reads ADLKPSLTGLTEEEAKEFHG. The a bacteriochlorophyll site is built by H20 and H38. Residues 22 to 44 form a helical membrane-spanning segment; it reads IFVTSTVLYLATAVIVHYLVWTA. The Periplasmic segment spans residues 45–56; that stretch reads RPWIAPIPKGWV. Positions 57–69 are excised as a propeptide; that stretch reads NLEGVQSALSYLV.

This sequence belongs to the antenna complex beta subunit family. In terms of assembly, the core complex is formed by different alpha and beta chains, binding bacteriochlorophyll molecules, and arranged most probably in tetrameric structures disposed around the reaction center. The non-pigmented gamma chains may constitute additional components.

It localises to the cell inner membrane. In terms of biological role, antenna complexes are light-harvesting systems, which transfer the excitation energy to the reaction centers. The polypeptide is Light-harvesting protein B-1015 beta chain (pufB) (Blastochloris viridis (Rhodopseudomonas viridis)).